A 656-amino-acid chain; its full sequence is MQTTSDVLIIGGGIIGLAIAVELKLKQKRLQVTVLSRDFAQAASHAAAGMLAPHAEQIAPGPMLDLCLASRWRYGEWVEKLEQLTGMETGYNPCGILSPVFEAPHGNSSTNSAWLDQETIRYYQPGLGEDVIGGWWHPDDGQVDNRKLVSALRQAAQSLGVQIQEGVTVQAIAQRHGQVTAVLTDQGSFQADSYVLANGSWAKELLPLPVFPVKGQMMALRMPAGTHQPYPLQRVLFGPQTYLVPRRDGRLIVGATSEQVDWQPHNTPQGIQTLLGRAIRLFPALGDWAIEDFWWGFRPGTPDEQPFLGYGPCDNLILAIGHYRNGILLAPITAALISDLILDQKVSPLIHAFSPQRFLTTTNPPVLSCRPMTAVFPSIANPSLPHAAENSEGSKDLLEIAGRKFHSRLMTGTGKYPSLTTMQESVASSGCQIVTVAVRRVQTNAPGHEGLAEAIDWSTIWMLPNTAGCQTAEEAIRVARLGREMAKLLGQEDNNFIKLEVIPDTQYLLPDPIGTLEAAEQLVKEGFAVLPYINADPLLAKRLEEVGCATVMPLGSPIGSGQGIRNAANIGIIIENAKVPVVVDAGIGTPSEAAQAMEMGADAVLINSAIAMAANPVAMAQAMGMATQAGRLAYLSGRMPIKAKANASSPLTGLVG.

The thiO stretch occupies residues 1–395 (MQTTSDVLII…HAAENSEGSK (395 aa)). Residues 7-21 (VLII…AIAV) and 48-50 (AGM) contribute to the FAD site. Glu56 provides a ligand contact to glycine. Residue Val169 coordinates FAD. Residues Arg298 and Arg324 each coordinate glycine. Residue 322–328 (HYRNGIL) participates in FAD binding. The thiG stretch occupies residues 396 to 656 (DLLEIAGRKF…ASSPLTGLVG (261 aa)). The active-site Schiff-base intermediate with DXP is the Lys498. 1-deoxy-D-xylulose 5-phosphate-binding positions include Gly559, 585–586 (AG), and 607–608 (NS).

It in the N-terminal section; belongs to the DAO family. ThiO subfamily. This sequence in the C-terminal section; belongs to the ThiG family. Interacts with ThiH and ThiS. Requires FAD as cofactor.

It is found in the cytoplasm. It catalyses the reaction glycine + O2 + H2O = glyoxylate + H2O2 + NH4(+). It carries out the reaction [ThiS sulfur-carrier protein]-C-terminal-Gly-aminoethanethioate + 2-iminoacetate + 1-deoxy-D-xylulose 5-phosphate = [ThiS sulfur-carrier protein]-C-terminal Gly-Gly + 2-[(2R,5Z)-2-carboxy-4-methylthiazol-5(2H)-ylidene]ethyl phosphate + 2 H2O + H(+). Its pathway is cofactor biosynthesis; thiamine diphosphate biosynthesis. In terms of biological role, catalyzes the FAD-dependent oxidative deamination of glycine. Is essential for thiamine biosynthesis since the oxidation of glycine catalyzed by ThiO generates the glycine imine intermediate (dehydroglycine) required for the biosynthesis of the thiazole ring of thiamine pyrophosphate. Functionally, catalyzes the rearrangement of 1-deoxy-D-xylulose 5-phosphate (DXP) to produce the thiazole phosphate moiety of thiamine. Sulfur is provided by the thiocarboxylate moiety of the carrier protein ThiS. In vitro, sulfur can be provided by H(2)S. The protein is Bifunctional protein ThiO/ThiG (thiO/thiG) of Synechocystis sp. (strain ATCC 27184 / PCC 6803 / Kazusa).